A 774-amino-acid chain; its full sequence is Beta-xylosidase/alpha-L-arabinofuranosidase 2 (774 aa).

A signal peptide spans 1–33 (MASVENRTPNVSVFLCFFVLFATLLLSGGRVSS). Asn136 carries N-linked (GlcNAc...) asparagine glycosylation. Asp303 is an active-site residue. Asn437 carries an N-linked (GlcNAc...) asparagine glycan.

Belongs to the glycoside hydrolase 3 family.

It localises to the secreted. Its subcellular location is the extracellular space. The protein localises to the extracellular matrix. It catalyses the reaction Hydrolysis of (1-&gt;4)-beta-D-xylans, to remove successive D-xylose residues from the non-reducing termini.. The enzyme catalyses Hydrolysis of terminal non-reducing alpha-L-arabinofuranoside residues in alpha-L-arabinosides.. Its function is as follows. A bifunctional beta-xylosidase/alpha-L-arabinosidase, exo-enzyme that acts synergistically with endohydrolases. Releases xylose and arabinose from cell walls. This is Beta-xylosidase/alpha-L-arabinofuranosidase 2 from Medicago sativa subsp. varia (Alfalfa).